Consider the following 82-residue polypeptide: Omega-conotoxin PnVIB (82 aa).

The first 22 residues, 1–22 (MKLTCMMIVAVLFLTAWTVVTA), serve as a signal peptide directing secretion. The propeptide occupies 23–52 (EPHSSNVLENLYLKAHHEMENPEASKLNTR). 3 disulfides stabilise this stretch: cysteine 56–cysteine 73, cysteine 63–cysteine 77, and cysteine 72–cysteine 81.

As to expression, expressed by the venom duct.

It is found in the secreted. Its function is as follows. Omega-conotoxins act at presynaptic membranes, they bind and block voltage-gated calcium channels (Cav). Acts on high voltage-activated (HVA) calcium currents in molluscan neurons. This is Omega-conotoxin PnVIB from Conus pennaceus (Feathered cone).